The sequence spans 375 residues: 23S rRNA (uracil(747)-C(5))-methyltransferase RlmC (375 aa).

4 residues coordinate [4Fe-4S] cluster: Cys3, Cys11, Cys14, and Cys87. Residues Gln212, Phe241, Glu262, and Asn307 each contribute to the S-adenosyl-L-methionine site. Catalysis depends on Cys334, which acts as the Nucleophile.

It belongs to the class I-like SAM-binding methyltransferase superfamily. RNA M5U methyltransferase family. RlmC subfamily.

It carries out the reaction uridine(747) in 23S rRNA + S-adenosyl-L-methionine = 5-methyluridine(747) in 23S rRNA + S-adenosyl-L-homocysteine + H(+). Catalyzes the formation of 5-methyl-uridine at position 747 (m5U747) in 23S rRNA. The chain is 23S rRNA (uracil(747)-C(5))-methyltransferase RlmC from Escherichia coli O7:K1 (strain IAI39 / ExPEC).